Consider the following 249-residue polypeptide: Probable transglycosylase SceD 2 (249 aa).

An N-terminal signal peptide occupies residues 1-27; it reads MKKTVIASTLAVGLGVTGIAAGNSADA. 2 stretches are compositionally biased toward low complexity: residues 80–95 and 103–171; these read WSYG…ASSE and QQTA…SSSS. A disordered region spans residues 80–203; sequence WSYGEGSGEG…PSSGASGKFQ (124 aa). Polar residues-rich tracts occupy residues 172–182 and 192–203; these read GVNAHLQQIAQ and TNPSSGASGKFQ.

Belongs to the transglycosylase family. SceD subfamily.

The protein resides in the secreted. Is able to cleave peptidoglycan and affects clumping and separation of bacterial cells. In Staphylococcus saprophyticus subsp. saprophyticus (strain ATCC 15305 / DSM 20229 / NCIMB 8711 / NCTC 7292 / S-41), this protein is Probable transglycosylase SceD 2 (sceD2).